A 763-amino-acid polypeptide reads, in one-letter code: DNA-binding protein SATB1 (763 aa).

Residues 1–15 show a composition bias toward basic and acidic residues; that stretch reads MDHLNEATQGKEHSE. Residues 1–54 are disordered; that stretch reads MDHLNEATQGKEHSEMSNNVSDPKGPPAKIARLEQNGSPLGRGRLGSTGAKMQG. The short motif at 20 to 40 is the Nuclear localization signal element; sequence VSDPKGPPAKIARLEQNGSPL. Lys51 participates in a covalent cross-link: Glycyl lysine isopeptide (Lys-Gly) (interchain with G-Cter in SUMO2). Residues 71–172 enclose the CMP domain; that stretch reads GTMLPVFCVV…VVTLKIQLHS (102 aa). The residue at position 136 (Lys136) is an N6-acetyllysine. Residues 139–143 carry the Protein interaction motif; the sequence is PVPLS. A CUTL domain is found at 175–248; that stretch reads KLEDLPPEQW…WYKHFKKTKD (74 aa). Ser185 is modified (phosphoserine). The tract at residues 224-278 is nuclear matrix targeting sequence (NMTS); that stretch reads YYANVSAAKCQEFGRWYKHFKKTKDMMVEMDSLSELSQQGANHVNFGQQPVPGNT. Residues 266–296 show a composition bias toward polar residues; sequence HVNFGQQPVPGNTAEQPPSPAQLSHGSQPSV. The segment at 266–307 is disordered; it reads HVNFGQQPVPGNTAEQPPSPAQLSHGSQPSVRTPLPNLHPGL. 2 consecutive DNA-binding regions (CUT) follow at residues 361-448 and 484-571; these read LEQQ…QDER and NGKP…EQES. DNA-binding positions include Gln390, 400–410, and Asn425; that span reads RTQGLLSEILR. Low complexity predominate over residues 591 to 607; it reads QIQQQQQQQQQQQQQQQ. The interval 591-649 is disordered; sequence QIQQQQQQQQQQQQQQQAPPPPQPQQQPQTGPRLPPRQPTVASPAESDEENRQKTRPRT. A Phosphoserine modification is found at Ser637. Positions 645-704 form a DNA-binding region, homeobox; it reads TRPRTKISVEALGILQSFIQDVGLYPDEEAIQTLSAQLDLPKYTIIKFFQNQRYYLKHHG. Residue Lys744 forms a Glycyl lysine isopeptide (Lys-Gly) (interchain with G-Cter in SUMO) linkage.

The protein belongs to the CUT homeobox family. Interacts with CUX1 (via DNA-binding domains); the interaction inhibits the attachment of both proteins to DNA. Homodimer. Part of the nuclear protein complex gamma-globin promoter and enhancer binding factor (gamma-PE) composed at least of SATB1 and HOXB2. Interaction with CtBP1 when not acetylated stabilizes attachment to DNA and promotes transcription repression. Interacts with PCAF. Interacts with sumoylated PML and HDAC1 via the CMP domain. Interacts also with DYNLT3 and POLR2J2. Binds to EP300. In terms of assembly, (Microbial infection) Interacts (via the CMP domain) with HIV-1 Tat. Sumoylated. Sumoylation promotes cleavage by caspases. Post-translationally, phosphorylated by PKC. Acetylated by PCAF. Phosphorylated form interacts with HDAC1, but unphosphorylated form interacts with PCAF. DNA binding properties are activated by phosphorylation and inactivated by acetylation. In opposition, gene expression is down-regulated by phosphorylation but up-regulated by acetylation. In terms of processing, cleaved at Asp-254 by caspase-3 and caspase-6 during T-cell apoptosis in thymus and during B-cell stimulation. The cleaved forms cannot dimerize and lose transcription regulation function because of impaired DNA and chromatin association. As to expression, expressed predominantly in thymus.

The protein resides in the nucleus matrix. Its subcellular location is the nucleus. The protein localises to the PML body. Functionally, crucial silencing factor contributing to the initiation of X inactivation mediated by Xist RNA that occurs during embryogenesis and in lymphoma. Binds to DNA at special AT-rich sequences, the consensus SATB1-binding sequence (CSBS), at nuclear matrix- or scaffold-associated regions. Thought to recognize the sugar-phosphate structure of double-stranded DNA. Transcriptional repressor controlling nuclear and viral gene expression in a phosphorylated and acetylated status-dependent manner, by binding to matrix attachment regions (MARs) of DNA and inducing a local chromatin-loop remodeling. Acts as a docking site for several chromatin remodeling enzymes (e.g. PML at the MHC-I locus) and also by recruiting corepressors (HDACs) or coactivators (HATs) directly to promoters and enhancers. Modulates genes that are essential in the maturation of the immune T-cell CD8SP from thymocytes. Required for the switching of fetal globin species, and beta- and gamma-globin genes regulation during erythroid differentiation. Plays a role in chromatin organization and nuclear architecture during apoptosis. Interacts with the unique region (UR) of cytomegalovirus (CMV). Alu-like motifs and SATB1-binding sites provide a unique chromatin context which seems preferentially targeted by the HIV-1 integration machinery. Moreover, HIV-1 Tat may overcome SATB1-mediated repression of IL2 and IL2RA (interleukin) in T-cells by binding to the same domain than HDAC1. Delineates specific epigenetic modifications at target gene loci, directly up-regulating metastasis-associated genes while down-regulating tumor-suppressor genes. Reprograms chromatin organization and the transcription profiles of breast tumors to promote growth and metastasis. Promotes neuronal differentiation of neural stem/progenitor cells in the adult subventricular zone, possibly by positively regulating the expression of NEUROD1. This is DNA-binding protein SATB1 from Homo sapiens (Human).